The chain runs to 937 residues: Outer membrane usher protein CS3-2 (937 aa).

This sequence belongs to the fimbrial export usher family. Post-translationally, a 97 kDa form of the protein is thought to be due to post-translational processing of isoform 104 kDa.

Its subcellular location is the cell outer membrane. In terms of biological role, these proteins are essential for the biogenesis of mature CS3 pili, but not for synthesis of the CS3 pilin subunit. The polypeptide is Outer membrane usher protein CS3-2 (Escherichia coli).